The chain runs to 984 residues: Putative formate dehydrogenase SAUSA300_2258 (984 aa).

One can recognise a 2Fe-2S ferredoxin-type domain in the interval 3-79 (EHLVVTLDGK…PMTVNTVNND (77 aa)). [2Fe-2S] cluster is bound by residues C37, C48, C51, and C63. The 4Fe-4S His(Cys)3-ligated-type domain occupies 79–119 (DVKDAQKEALDRILEKHMLYCTVCDYNNGDCEIHNTMDAWG). Positions 95, 99, 102, 109, 147, 150, 153, 157, 190, 193, 196, 200, 264, 267, 271, and 299 each coordinate [4Fe-4S] cluster. 4Fe-4S ferredoxin-type domains lie at 138-165 (PFYR…VNET) and 181-211 (NDVP…VNME). The formate dehydrogenase stretch occupies residues 252-984 (MRKERIKKTK…YVFPGNQVDK (733 aa)). The 57-residue stretch at 257–313 (IKKTKTVCTYCGVGCSFEVWTKDREILKVQPSHDSPANKIATCVKGKFSWGHINSDQ) folds into the 4Fe-4S Mo/W bis-MGD-type domain.

In the C-terminal section; belongs to the prokaryotic molybdopterin-containing oxidoreductase family. [2Fe-2S] cluster serves as cofactor. It depends on [4Fe-4S] cluster as a cofactor. Mo-bis(molybdopterin guanine dinucleotide) is required as a cofactor.

It carries out the reaction formate + NAD(+) = CO2 + NADH. The polypeptide is Putative formate dehydrogenase SAUSA300_2258 (Staphylococcus aureus (strain USA300)).